A 294-amino-acid chain; its full sequence is ATP synthase gamma chain (294 aa).

The protein belongs to the ATPase gamma chain family. In terms of assembly, F-type ATPases have 2 components, CF(1) - the catalytic core - and CF(0) - the membrane proton channel. CF(1) has five subunits: alpha(3), beta(3), gamma(1), delta(1), epsilon(1). CF(0) has three main subunits: a, b and c.

It is found in the cell inner membrane. Produces ATP from ADP in the presence of a proton gradient across the membrane. The gamma chain is believed to be important in regulating ATPase activity and the flow of protons through the CF(0) complex. This is ATP synthase gamma chain from Mesorhizobium japonicum (strain LMG 29417 / CECT 9101 / MAFF 303099) (Mesorhizobium loti (strain MAFF 303099)).